A 455-amino-acid polypeptide reads, in one-letter code: Probable glycine dehydrogenase (decarboxylating) subunit 1 (455 aa).

Belongs to the GcvP family. N-terminal subunit subfamily. As to quaternary structure, the glycine cleavage system is composed of four proteins: P, T, L and H. In this organism, the P 'protein' is a heterodimer of two subunits.

It catalyses the reaction N(6)-[(R)-lipoyl]-L-lysyl-[glycine-cleavage complex H protein] + glycine + H(+) = N(6)-[(R)-S(8)-aminomethyldihydrolipoyl]-L-lysyl-[glycine-cleavage complex H protein] + CO2. In terms of biological role, the glycine cleavage system catalyzes the degradation of glycine. The P protein binds the alpha-amino group of glycine through its pyridoxal phosphate cofactor; CO(2) is released and the remaining methylamine moiety is then transferred to the lipoamide cofactor of the H protein. In Saccharolobus solfataricus (strain ATCC 35092 / DSM 1617 / JCM 11322 / P2) (Sulfolobus solfataricus), this protein is Probable glycine dehydrogenase (decarboxylating) subunit 1.